The sequence spans 132 residues: MSMQDPIADMFTRIRNGLSAEKEFVSVPFSKIKMEIANFLVNEGYIKSCSKGTTSMGHPSIEIELKYHAGAPVIEMIKRVSRPSLRIYKSHADLPKVYGGYGVAIVSTSKGLVSDRKARDLGVGGEIIGYVA.

This sequence belongs to the universal ribosomal protein uS8 family. In terms of assembly, part of the 30S ribosomal subunit. Contacts proteins S5 and S12.

Functionally, one of the primary rRNA binding proteins, it binds directly to 16S rRNA central domain where it helps coordinate assembly of the platform of the 30S subunit. This Francisella tularensis subsp. holarctica (strain FTNF002-00 / FTA) protein is Small ribosomal subunit protein uS8.